The sequence spans 879 residues: MKQLSSAEVRQLFLDFFKEKGHTIEPSAPLVPNNDPTILWINSGVATMKKYFDGSVIPDNPRMANAQKSIRTNDIENVGKTARHHTFFEMLGNFSIGDYFKEGAIVFAWEFLTSPKWIGFDPDKLYVTVYPEDEEAKTIWREKIGLSEEHIVEIEDNFWDIGIGPSGPDSEIFYDRGPTFGDDTSDPELYPGGENERYLEIWNLVFSQFNHNPDGTYTPLPKQNIDTGMGLERMVSIIQDAPTNFETDLFMPIIREVEQIAGVKYGHNQENDVAFKVIADHIRTVAFAIGDGALPSNEGRGYILRRLLRRAVRYAKVLTINEPFMYKLVPVVGKIMNSFYPEVENQTDFIQKVIRTEEERFHETLNEGLAILETILKTAKETNEQVIKGADIFKLYDTFGFPVELTEEYAEDHGLKVDHAGFEAEMKEQRDRARSARADVKSMQVQGELLANLTAKSEFVGYNATEHVSEILYIIQDDALVDEVASGKTAQVIFKETPFYAESGGQVADKGTIESETGLAYVEDVQKAPNKQNLHRISVKEGVLKTGDTVKLAVDKVKRRETIKNHTATHLLHRALKDTLGEHVNQAGSLVSPDRLRFDFSHFGQITEEELTKMEEIVNEKIWEQINVVIEEMPIAEAKELGAMALFGEKYGDVVRVVQVGKYSIELCGGVHVRNTADIGLFKIVSETGIGAGTRRIEAVTGKEAYRFVTEQENTLKHTANLLKATTKEAPQKVEQLQADLREVKRENESLLSKLASAASADIFESPEEIGGVKVIAKQVNAKDMNQLRQFVDNWKDKKIGGILVLGAVQGEKVNLISAVSEDAIKAGYHAGKLLKEVATKCGGNGGGRPDMAQAGGKNPAELATALDYVSTCVKEQQA.

Zn(2+)-binding residues include His-566, His-570, Cys-668, and His-672.

This sequence belongs to the class-II aminoacyl-tRNA synthetase family. Zn(2+) is required as a cofactor.

The protein localises to the cytoplasm. The enzyme catalyses tRNA(Ala) + L-alanine + ATP = L-alanyl-tRNA(Ala) + AMP + diphosphate. Catalyzes the attachment of alanine to tRNA(Ala) in a two-step reaction: alanine is first activated by ATP to form Ala-AMP and then transferred to the acceptor end of tRNA(Ala). Also edits incorrectly charged Ser-tRNA(Ala) and Gly-tRNA(Ala) via its editing domain. The sequence is that of Alanine--tRNA ligase from Listeria welshimeri serovar 6b (strain ATCC 35897 / DSM 20650 / CCUG 15529 / CIP 8149 / NCTC 11857 / SLCC 5334 / V8).